The primary structure comprises 89 residues: Small ribosomal subunit protein uS15 (89 aa).

The protein belongs to the universal ribosomal protein uS15 family. Part of the 30S ribosomal subunit. Forms a bridge to the 50S subunit in the 70S ribosome, contacting the 23S rRNA.

One of the primary rRNA binding proteins, it binds directly to 16S rRNA where it helps nucleate assembly of the platform of the 30S subunit by binding and bridging several RNA helices of the 16S rRNA. Functionally, forms an intersubunit bridge (bridge B4) with the 23S rRNA of the 50S subunit in the ribosome. The protein is Small ribosomal subunit protein uS15 of Dictyoglomus turgidum (strain DSM 6724 / Z-1310).